Consider the following 283-residue polypeptide: NADPH-dependent 3-dehydrocapnine reductase (283 aa).

Y153 functions as the Proton acceptor in the catalytic mechanism.

It belongs to the short-chain dehydrogenases/reductases (SDR) family.

The catalysed reaction is 3-oxocapnine + NADPH + H(+) = capnine + NADP(+). It participates in lipid metabolism. In terms of biological role, reductase involved in the biosynthesis of capnine, a sulfonolipid present in the outer membrane of gliding Bacteroidetes and essential for gliding motility. Catalyzes the reduction of 3-dehydrocapnine to capnine. This Ornithobacterium rhinotracheale protein is NADPH-dependent 3-dehydrocapnine reductase.